We begin with the raw amino-acid sequence, 143 residues long: Ribosome maturation factor RimP (143 aa).

This sequence belongs to the RimP family.

It localises to the cytoplasm. In terms of biological role, required for maturation of 30S ribosomal subunits. This is Ribosome maturation factor RimP from Nitrosomonas eutropha (strain DSM 101675 / C91 / Nm57).